The chain runs to 215 residues: Glutathione S-transferase-like protein (215 aa).

The 76-residue stretch at M1–P76 folds into the GST N-terminal domain. The region spanning N82–V215 is the GST C-terminal domain.

The protein belongs to the GST superfamily.

The polypeptide is Glutathione S-transferase-like protein (Aspergillus aculeatus (strain ATCC 16872 / CBS 172.66 / WB 5094)).